The primary structure comprises 355 residues: IgG receptor FcRn large subunit p51 (355 aa).

An N-terminal signal peptide occupies residues 1 to 24; sequence MRVPRSQPWGLALLLLLLPGTLRA. The alpha-1 stretch occupies residues 25–111; sequence AESHRSLLYH…ALKVFGDRDS (87 aa). The Extracellular segment spans residues 25-300; sequence AESHRSLLYH…LESPAKSSVP (276 aa). Positions 112–201 are alpha-2; sequence YTLQGLLGCE…ERGRGNLEWK (90 aa). Asn-126 carries N-linked (GlcNAc...) asparagine glycosylation. Positions 202-291 are alpha-3; it reads EPPSMRLKAR…GPAQPLTVEL (90 aa). Residues 203–292 form the Ig-like C1-type domain; the sequence is PPSMRLKARP…PAQPLTVELE (90 aa). The cysteines at positions 222 and 276 are disulfide-linked. Positions 293–298 are connecting peptide; sequence SPAKSS. Residues 301 to 321 traverse the membrane as a helical segment; it reads VIGISIGFLLLMTVAAGGALL. The Cytoplasmic segment spans residues 322–355; the sequence is WRRRKGLPAPWIAFRGDDIGALLPTPGLSKDAES.

This sequence belongs to the immunoglobulin superfamily. FcRn complex consists of two subunits: p51, and p14 which is equivalent to beta-2-microglobulin. It forms an MHC class I-like heterodimer. Interacts with albumin/ALB; this interaction regulates ALB homeostasis. In terms of tissue distribution, expressed in liver and mammary gland of non-lactating animals. Expressed in hepatocytes and in epithelial cells of portal bile ductuli. Not expressed in the brances of portal veins or hepatic arteries. Expressed in the epithelial cells of the acini and ducti in the mammary gland with expression emphasized at the apical side. Not expressed in blood vessels of mammary gland.

The protein resides in the cell membrane. It is found in the endosome membrane. Its function is as follows. Cell surface receptor that transfers passive humoral immunity from the mother to the newborn. Binds to the Fc region of monomeric immunoglobulin gamma and mediates its selective uptake from milk. IgG in the milk is bound at the apical surface of the intestinal epithelium. The resultant FcRn-IgG complexes are transcytosed across the intestinal epithelium and IgG is released from FcRn into blood or tissue fluids. Throughout life, contributes to effective humoral immunity by recycling IgG and extending its half-life in the circulation. Mechanistically, monomeric IgG binding to FcRn in acidic endosomes of endothelial and hematopoietic cells recycles IgG to the cell surface where it is released into the circulation. In addition of IgG, regulates homeostasis of the other most abundant circulating protein albumin/ALB. The chain is IgG receptor FcRn large subunit p51 from Camelus dromedarius (Dromedary).